Consider the following 334-residue polypeptide: tRNA-cytidine(32) 2-sulfurtransferase (334 aa).

Residues 74–79 carry the PP-loop motif motif; it reads SGGKDS. 3 residues coordinate [4Fe-4S] cluster: C149, C152, and C240.

It belongs to the TtcA family. Homodimer. It depends on Mg(2+) as a cofactor. The cofactor is [4Fe-4S] cluster.

It localises to the cytoplasm. The catalysed reaction is cytidine(32) in tRNA + S-sulfanyl-L-cysteinyl-[cysteine desulfurase] + AH2 + ATP = 2-thiocytidine(32) in tRNA + L-cysteinyl-[cysteine desulfurase] + A + AMP + diphosphate + H(+). It participates in tRNA modification. Catalyzes the ATP-dependent 2-thiolation of cytidine in position 32 of tRNA, to form 2-thiocytidine (s(2)C32). The sulfur atoms are provided by the cysteine/cysteine desulfurase (IscS) system. The chain is tRNA-cytidine(32) 2-sulfurtransferase from Burkholderia ambifaria (strain ATCC BAA-244 / DSM 16087 / CCUG 44356 / LMG 19182 / AMMD) (Burkholderia cepacia (strain AMMD)).